Reading from the N-terminus, the 533-residue chain is Flavin-containing monooxygenase 5 (533 aa).

Arginine 5 bears the Dimethylated arginine mark. Residues 10 to 14 (GAGAS), glutamate 33, and 41 to 42 (LW) each bind FAD. Phosphoserine is present on serine 54. Position 56 is a phosphotyrosine (tyrosine 56). Position 58 is a phosphoserine (serine 58). 62-63 (NT) is a binding site for FAD. Residue 196 to 199 (SGGD) participates in NADP(+) binding. Serine 280 bears the Phosphoserine mark. Phosphothreonine is present on threonine 284. Serine 401 is modified (phosphoserine). A helical membrane pass occupies residues 513-533 (MMTMGKFMLAIAFLAIAVVYF).

Belongs to the FMO family. Requires FAD as cofactor. Kidney and liver.

Its subcellular location is the microsome membrane. It is found in the endoplasmic reticulum membrane. The catalysed reaction is N,N-dimethylaniline + NADPH + O2 + H(+) = N,N-dimethylaniline N-oxide + NADP(+) + H2O. It carries out the reaction NADPH + O2 + H(+) = H2O2 + NADP(+). The enzyme catalyses heptan-2-one + NADPH + O2 + H(+) = pentyl acetate + NADP(+) + H2O. It catalyses the reaction octan-3-one + NADPH + O2 + H(+) = pentyl propanoate + NADP(+) + H2O. The catalysed reaction is octan-3-one + NADPH + O2 + H(+) = ethyl hexanoate + NADP(+) + H2O. It carries out the reaction hexan-3-one + NADPH + O2 + H(+) = ethyl butanoate + NADP(+) + H2O. The enzyme catalyses hexan-3-one + NADPH + O2 + H(+) = propyl propanoate + NADP(+) + H2O. It catalyses the reaction heptan-4-one + NADPH + O2 + H(+) = propyl butanoate + NADP(+) + H2O. The catalysed reaction is (2E)-geranial + NADPH + O2 + H(+) = (1E)-2,6-dimethylhepta-1,5-dien-1-yl formate + NADP(+) + H2O. It carries out the reaction sulcatone + NADPH + O2 + H(+) = 4-methylpent-3-en-1-yl acetate + NADP(+) + H2O. Functionally, acts as a Baeyer-Villiger monooxygenase on a broad range of substrates. Catalyzes the insertion of an oxygen atom into a carbon-carbon bond adjacent to a carbonyl, which converts ketones to esters. Active on diverse carbonyl compounds, whereas soft nucleophiles are mostly non- or poorly reactive. In contrast with other forms of FMO it is non- or poorly active on 'classical' substrates such as drugs, pesticides, and dietary components containing soft nucleophilic heteroatoms. Able to oxidize drug molecules bearing a carbonyl group on an aliphatic chain, such as nabumetone and pentoxifylline. Also, in the absence of substrates, shows slow but yet significant NADPH oxidase activity. Acts as a positive modulator of cholesterol biosynthesis as well as glucose homeostasis, promoting metabolic aging via pleiotropic effects. This Oryctolagus cuniculus (Rabbit) protein is Flavin-containing monooxygenase 5 (FMO5).